A 344-amino-acid polypeptide reads, in one-letter code: Dihydroorotase (344 aa).

Zn(2+) contacts are provided by His13 and His15. Substrate contacts are provided by residues 15–17 and Asn41; that span reads HVR. Zn(2+)-binding residues include Lys99, His136, and His174. Lys99 is subject to N6-carboxylysine. His136 provides a ligand contact to substrate. Residue Leu219 coordinates substrate. Asp247 serves as a coordination point for Zn(2+). Asp247 is a catalytic residue. The substrate site is built by His251 and Ala263.

This sequence belongs to the metallo-dependent hydrolases superfamily. DHOase family. Class II DHOase subfamily. In terms of assembly, homodimer. The cofactor is Zn(2+).

It carries out the reaction (S)-dihydroorotate + H2O = N-carbamoyl-L-aspartate + H(+). It participates in pyrimidine metabolism; UMP biosynthesis via de novo pathway; (S)-dihydroorotate from bicarbonate: step 3/3. Its function is as follows. Catalyzes the reversible cyclization of carbamoyl aspartate to dihydroorotate. In Azoarcus sp. (strain BH72), this protein is Dihydroorotase.